A 775-amino-acid polypeptide reads, in one-letter code: Subtilisin-like protease SBT3.8 (775 aa).

The first 26 residues, 1-26, serve as a signal peptide directing secretion; that stretch reads MKSCRTLIFVAIILNGLSTFVAHAGA. Positions 27 to 109 are cleaved as a propeptide — activation peptide; that stretch reads ESKVHIVYLG…VTPDSFYQLD (83 aa). Residues 30–108 form the Inhibitor I9 domain; the sequence is VHIVYLGEKQ…HVTPDSFYQL (79 aa). The Peptidase S8 domain occupies 113 to 622; it reads TWDYLGLSVA…GGLVNPEKAA (510 aa). Asn129 carries N-linked (GlcNAc...) asparagine glycosylation. Catalysis depends on Asp143, which acts as the Charge relay system. Asn174 and Asn202 each carry an N-linked (GlcNAc...) asparagine glycan. His218 serves as the catalytic Charge relay system. A PA domain is found at 384 to 476; sequence SLVYPENPGN…VDYELGTDIL (93 aa). 3 N-linked (GlcNAc...) asparagine glycosylation sites follow: Asn395, Asn410, and Asn538. Ser553 serves as the catalytic Charge relay system. N-linked (GlcNAc...) asparagine glycosylation is found at Asn645, Asn721, and Asn756.

Belongs to the peptidase S8 family.

The protein localises to the secreted. The protein is Subtilisin-like protease SBT3.8 of Arabidopsis thaliana (Mouse-ear cress).